An 87-amino-acid polypeptide reads, in one-letter code: Small ribosomal subunit protein bS20 (87 aa).

The segment at 1-26 is disordered; that stretch reads MANIKSAKKRAVQSEKARKHNASRRS.

Belongs to the bacterial ribosomal protein bS20 family.

Functionally, binds directly to 16S ribosomal RNA. This chain is Small ribosomal subunit protein bS20, found in Klebsiella pneumoniae (strain 342).